The following is a 957-amino-acid chain: Glycine dehydrogenase (decarboxylating) (957 aa).

At lysine 708 the chain carries N6-(pyridoxal phosphate)lysine.

It belongs to the GcvP family. In terms of assembly, the glycine cleavage system is composed of four proteins: P, T, L and H. The cofactor is pyridoxal 5'-phosphate.

It carries out the reaction N(6)-[(R)-lipoyl]-L-lysyl-[glycine-cleavage complex H protein] + glycine + H(+) = N(6)-[(R)-S(8)-aminomethyldihydrolipoyl]-L-lysyl-[glycine-cleavage complex H protein] + CO2. Its function is as follows. The glycine cleavage system catalyzes the degradation of glycine. The P protein binds the alpha-amino group of glycine through its pyridoxal phosphate cofactor; CO(2) is released and the remaining methylamine moiety is then transferred to the lipoamide cofactor of the H protein. This is Glycine dehydrogenase (decarboxylating) from Escherichia coli (strain SE11).